The following is a 496-amino-acid chain: Glutamate--tRNA ligase (496 aa).

Positions 12-22 (PSPTGHLHIGN) match the 'HIGH' region motif. The 'KMSKS' region signature appears at 259 to 263 (KLSKR). Lys262 lines the ATP pocket.

This sequence belongs to the class-I aminoacyl-tRNA synthetase family. Glutamate--tRNA ligase type 1 subfamily. Monomer.

The protein resides in the cytoplasm. It carries out the reaction tRNA(Glu) + L-glutamate + ATP = L-glutamyl-tRNA(Glu) + AMP + diphosphate. In terms of biological role, catalyzes the attachment of glutamate to tRNA(Glu) in a two-step reaction: glutamate is first activated by ATP to form Glu-AMP and then transferred to the acceptor end of tRNA(Glu). The chain is Glutamate--tRNA ligase from Lactiplantibacillus plantarum (strain ATCC BAA-793 / NCIMB 8826 / WCFS1) (Lactobacillus plantarum).